Consider the following 335-residue polypeptide: tRNA N6-adenosine threonylcarbamoyltransferase (335 aa).

Fe cation is bound by residues H107 and H111. Substrate is bound by residues 129 to 133, D162, G175, and N268; that span reads LVSGG. D296 is a binding site for Fe cation.

It belongs to the KAE1 / TsaD family. Fe(2+) serves as cofactor.

It localises to the cytoplasm. The catalysed reaction is L-threonylcarbamoyladenylate + adenosine(37) in tRNA = N(6)-L-threonylcarbamoyladenosine(37) in tRNA + AMP + H(+). Functionally, required for the formation of a threonylcarbamoyl group on adenosine at position 37 (t(6)A37) in tRNAs that read codons beginning with adenine. Is involved in the transfer of the threonylcarbamoyl moiety of threonylcarbamoyl-AMP (TC-AMP) to the N6 group of A37, together with TsaE and TsaB. TsaD likely plays a direct catalytic role in this reaction. In Campylobacter fetus subsp. fetus (strain 82-40), this protein is tRNA N6-adenosine threonylcarbamoyltransferase.